Here is a 319-residue protein sequence, read N- to C-terminus: Thiamine-monophosphate kinase (319 aa).

Mg(2+)-binding residues include D28, T43, T44, and D45. H52 is a binding site for substrate. Position 73 (D73) interacts with Mg(2+). ATP-binding positions include Y104, 121–122 (GD), and R145. D122 is a binding site for Mg(2+). Position 218 (D218) interacts with Mg(2+). ATP is bound at residue S220. D221 is a binding site for Mg(2+). Substrate-binding residues include E268 and Y315.

Belongs to the thiamine-monophosphate kinase family.

It carries out the reaction thiamine phosphate + ATP = thiamine diphosphate + ADP. The protein operates within cofactor biosynthesis; thiamine diphosphate biosynthesis; thiamine diphosphate from thiamine phosphate: step 1/1. Functionally, catalyzes the ATP-dependent phosphorylation of thiamine-monophosphate (TMP) to form thiamine-pyrophosphate (TPP), the active form of vitamin B1. The chain is Thiamine-monophosphate kinase from Methanocaldococcus jannaschii (strain ATCC 43067 / DSM 2661 / JAL-1 / JCM 10045 / NBRC 100440) (Methanococcus jannaschii).